Reading from the N-terminus, the 103-residue chain is Urease subunit gamma (103 aa).

The protein belongs to the urease gamma subunit family. In terms of assembly, heterotrimer of UreA (gamma), UreB (beta) and UreC (alpha) subunits. Three heterotrimers associate to form the active enzyme.

The protein localises to the cytoplasm. It catalyses the reaction urea + 2 H2O + H(+) = hydrogencarbonate + 2 NH4(+). The protein operates within nitrogen metabolism; urea degradation; CO(2) and NH(3) from urea (urease route): step 1/1. The chain is Urease subunit gamma from Paracoccus denitrificans (strain Pd 1222).